The primary structure comprises 260 residues: UPF0246 protein SCO2297 (260 aa).

Belongs to the UPF0246 family.

In Streptomyces coelicolor (strain ATCC BAA-471 / A3(2) / M145), this protein is UPF0246 protein SCO2297.